The chain runs to 194 residues: Recombination protein RecR (194 aa).

The C4-type zinc finger occupies Cys-53–Cys-68. The 96-residue stretch at Ser-76–Pro-171 folds into the Toprim domain.

The protein belongs to the RecR family.

Its function is as follows. May play a role in DNA repair. It seems to be involved in an RecBC-independent recombinational process of DNA repair. It may act with RecF and RecO. The chain is Recombination protein RecR from Anaplasma phagocytophilum (strain HZ).